A 109-amino-acid polypeptide reads, in one-letter code: Small ribosomal subunit protein uS17 (109 aa).

This sequence belongs to the universal ribosomal protein uS17 family. Part of the 30S ribosomal subunit.

One of the primary rRNA binding proteins, it binds specifically to the 5'-end of 16S ribosomal RNA. The chain is Small ribosomal subunit protein uS17 from Halobacterium salinarum (strain ATCC 29341 / DSM 671 / R1).